Here is a 136-residue protein sequence, read N- to C-terminus: Invertebrate-type lysozyme (136 aa).

A signal peptide spans 1–11 (METVSVEEGLD). One can recognise an I-type lysozyme domain in the interval 14–130 (PGMVSQKCLL…WELLQKIPGC (117 aa)). 7 disulfides stabilise this stretch: cysteine 21/cysteine 98, cysteine 24/cysteine 130, cysteine 26/cysteine 33, cysteine 38/cysteine 47, cysteine 60/cysteine 80, cysteine 70/cysteine 76, and cysteine 94/cysteine 112. The active-site Proton donor is the glutamate 29. Catalysis depends on aspartate 41, which acts as the Nucleophile. Residue 53–59 (KQPYWID) coordinates substrate. Residue asparagine 75 is glycosylated (N-linked (GlcNAc...) asparagine). Residues tyrosine 84, tyrosine 92, 105 to 107 (HNG), and lysine 119 each bind substrate.

Homodimer in its autoinhibited state. Active as monomer.

The protein localises to the secreted. The enzyme catalyses Hydrolysis of (1-&gt;4)-beta-linkages between N-acetylmuramic acid and N-acetyl-D-glucosamine residues in a peptidoglycan and between N-acetyl-D-glucosamine residues in chitodextrins.. Chitinase activity is activated by high salt concentrations which cause the release of the monomer from the autoinhibited homodimer. Functionally, bacteriolytic activity against Gram-positive bacterium M.luteus and thereby probably protects against bacterial infection. Also has chitinase activity. May act as an ispopeptidase, cleaving isopeptide bonds between the side chains of Lys and Gln residues in proteins or in the cross-linking peptide of peptidoglycan in bacterial cell walls. This is Invertebrate-type lysozyme from Ruditapes philippinarum (Japanese carpet shell).